The sequence spans 176 residues: Ferritin, middle subunit (176 aa).

Residues 7 to 156 (QNYHHDCERA…DHITNLTKMD (150 aa)) form the Ferritin-like diiron domain. Fe cation is bound by residues Glu-24, Glu-59, His-62, Glu-104, and Gln-138.

Belongs to the ferritin family. In terms of assembly, oligomer of 24 subunits. There are at least two types of subunits. The functional molecule forms a roughly spherical shell with a diameter of 12 nm and contains a central cavity into which the insoluble mineral iron core is deposited. Almost exclusively in the gonads.

The catalysed reaction is 4 Fe(2+) + O2 + 4 H(+) = 4 Fe(3+) + 2 H2O. Functionally, stores iron in a soluble, non-toxic, readily available form. Important for iron homeostasis. Has ferroxidase activity. Iron is taken up in the ferrous form and deposited as ferric hydroxides after oxidation. This chain is Ferritin, middle subunit, found in Salmo salar (Atlantic salmon).